We begin with the raw amino-acid sequence, 160 residues long: Large ribosomal subunit protein bL19 (160 aa).

Composition is skewed to basic and acidic residues over residues 1-15 (MTED…KEES) and 28-39 (ATRETKPKDSPS). A disordered region spans residues 1 to 44 (MTEDLKNTSPSKEESNEIEESSKATPKATRETKPKDSPSKTKLS).

Belongs to the bacterial ribosomal protein bL19 family.

In terms of biological role, this protein is located at the 30S-50S ribosomal subunit interface and may play a role in the structure and function of the aminoacyl-tRNA binding site. This Prochlorococcus marinus (strain SARG / CCMP1375 / SS120) protein is Large ribosomal subunit protein bL19.